Consider the following 330-residue polypeptide: Tetraacyldisaccharide 4'-kinase (330 aa).

58-65 (TVGGSGKT) contributes to the ATP binding site.

The protein belongs to the LpxK family.

The catalysed reaction is a lipid A disaccharide + ATP = a lipid IVA + ADP + H(+). The protein operates within glycolipid biosynthesis; lipid IV(A) biosynthesis; lipid IV(A) from (3R)-3-hydroxytetradecanoyl-[acyl-carrier-protein] and UDP-N-acetyl-alpha-D-glucosamine: step 6/6. Functionally, transfers the gamma-phosphate of ATP to the 4'-position of a tetraacyldisaccharide 1-phosphate intermediate (termed DS-1-P) to form tetraacyldisaccharide 1,4'-bis-phosphate (lipid IVA). The polypeptide is Tetraacyldisaccharide 4'-kinase (Shewanella pealeana (strain ATCC 700345 / ANG-SQ1)).